The sequence spans 370 residues: Peridinin-chlorophyll a-binding protein 1, chloroplastic (370 aa).

The N-terminal 57 residues, Met1–Ala57, are a transit peptide targeting the chloroplast. 2 tandem repeats follow at residues Asp58–Gly220 and Asp221–Arg370.

As to quaternary structure, homotrimer.

Its subcellular location is the plastid. The protein localises to the chloroplast. Water-soluble antenna for capture of solar energy in the blue-green range. Peridinin is an asymmetric carotenoid. The chain is Peridinin-chlorophyll a-binding protein 1, chloroplastic from Amphidinium carterae (Dinoflagellate).